Reading from the N-terminus, the 166-residue chain is HTH-type transcriptional regulator PecS (166 aa).

The 136-residue stretch at 25 to 160 (PMLVIGTLSR…LRALLGRVEK (136 aa)) folds into the HTH marR-type domain.

The protein resides in the cytoplasm. With respect to regulation, the presence of PecM is required to ensure the full regulation of the pecS-pecM intergenic region by PecS. Its function is as follows. Negatively regulates the expression of genes encoding pectinase and cellulase, which play a major role in virulence, and the expression of the blue pigment indigoidine, which is implicated in pathogenicity and protection from oxidative stress. Represses the expression of genes involved in indigoidine biosynthesis by binding to indA and indC promoter regions. Also binds to promoter sites in the pecS-pecM intergenic region and negatively autoregulates its expression as well as that of pecM. The chain is HTH-type transcriptional regulator PecS from Dickeya dadantii (strain 3937) (Erwinia chrysanthemi (strain 3937)).